The sequence spans 754 residues: 5-methyltetrahydropteroyltriglutamate--homocysteine methyltransferase (754 aa).

5-methyltetrahydropteroyltri-L-glutamate contacts are provided by residues 15–18 (RELK) and lysine 114. L-homocysteine is bound by residues 430–432 (IGS) and glutamate 483. L-methionine contacts are provided by residues 430 to 432 (IGS) and glutamate 483. 5-methyltetrahydropteroyltri-L-glutamate is bound by residues 514-515 (RC) and tryptophan 560. Aspartate 598 serves as a coordination point for L-homocysteine. Aspartate 598 provides a ligand contact to L-methionine. Residue glutamate 604 participates in 5-methyltetrahydropteroyltri-L-glutamate binding. Zn(2+)-binding residues include histidine 641, cysteine 643, and glutamate 665. The active-site Proton donor is histidine 694. Residue cysteine 726 participates in Zn(2+) binding.

This sequence belongs to the vitamin-B12 independent methionine synthase family. Requires Zn(2+) as cofactor.

It carries out the reaction 5-methyltetrahydropteroyltri-L-glutamate + L-homocysteine = tetrahydropteroyltri-L-glutamate + L-methionine. The protein operates within amino-acid biosynthesis; L-methionine biosynthesis via de novo pathway; L-methionine from L-homocysteine (MetE route): step 1/1. In terms of biological role, catalyzes the transfer of a methyl group from 5-methyltetrahydrofolate to homocysteine resulting in methionine formation. This chain is 5-methyltetrahydropteroyltriglutamate--homocysteine methyltransferase, found in Campylobacter jejuni subsp. jejuni serotype O:2 (strain ATCC 700819 / NCTC 11168).